The sequence spans 264 residues: Protein FAM228B (264 aa).

It belongs to the FAM228 family.

This chain is Protein FAM228B (FAM228B), found in Bos taurus (Bovine).